We begin with the raw amino-acid sequence, 612 residues long: Dihydroxy-acid dehydratase (612 aa).

Residue aspartate 81 coordinates Mg(2+). Cysteine 122 serves as a coordination point for [2Fe-2S] cluster. Aspartate 123 and lysine 124 together coordinate Mg(2+). N6-carboxylysine is present on lysine 124. Cysteine 193 is a binding site for [2Fe-2S] cluster. Residue glutamate 489 participates in Mg(2+) binding. Residue serine 515 is the Proton acceptor of the active site.

Belongs to the IlvD/Edd family. Homodimer. It depends on [2Fe-2S] cluster as a cofactor. The cofactor is Mg(2+).

It catalyses the reaction (2R)-2,3-dihydroxy-3-methylbutanoate = 3-methyl-2-oxobutanoate + H2O. The catalysed reaction is (2R,3R)-2,3-dihydroxy-3-methylpentanoate = (S)-3-methyl-2-oxopentanoate + H2O. The protein operates within amino-acid biosynthesis; L-isoleucine biosynthesis; L-isoleucine from 2-oxobutanoate: step 3/4. Its pathway is amino-acid biosynthesis; L-valine biosynthesis; L-valine from pyruvate: step 3/4. Functionally, functions in the biosynthesis of branched-chain amino acids. Catalyzes the dehydration of (2R,3R)-2,3-dihydroxy-3-methylpentanoate (2,3-dihydroxy-3-methylvalerate) into 2-oxo-3-methylpentanoate (2-oxo-3-methylvalerate) and of (2R)-2,3-dihydroxy-3-methylbutanoate (2,3-dihydroxyisovalerate) into 2-oxo-3-methylbutanoate (2-oxoisovalerate), the penultimate precursor to L-isoleucine and L-valine, respectively. This chain is Dihydroxy-acid dehydratase, found in Pseudomonas paraeruginosa (strain DSM 24068 / PA7) (Pseudomonas aeruginosa (strain PA7)).